The chain runs to 293 residues: MNQNNDFKCHIWFTEYHNNNVALSVRVKDILYREKSGFQEIEIIDTYDFGKALILDNTFQTTERDEFIYHELISHIPLFTHPNPRNVLVIGGGDGGTVREVVKHKSVETVDFVELDEKVIEACKKYMPKLSCEIDNEKVNLIITDGIKYVAETEKKYDVIIVDCPDPVGPAKGLFEKEFYKNVFKCLNDDGIMVQQSESPLYNLDLIQNICRYLKDAGFKIIMPYTYPMPTYPSGFWSFTLASKKYNPLEVDEARIKEALKDMETKYYDEEVHKGIFLAAPKFLKDAVKKALE.

The PABS domain maps to 10–244; sequence HIWFTEYHNN…GFWSFTLASK (235 aa). Q39 contacts S-methyl-5'-thioadenosine. 2 residues coordinate spermidine: H70 and D94. S-methyl-5'-thioadenosine contacts are provided by residues E114 and 145–146; that span reads DG. The Proton acceptor role is filled by D163. 163-166 contributes to the spermidine binding site; the sequence is DCPD. Position 170 (P170) interacts with S-methyl-5'-thioadenosine.

This sequence belongs to the spermidine/spermine synthase family. Homodimer or homotetramer.

Its subcellular location is the cytoplasm. The enzyme catalyses S-adenosyl 3-(methylsulfanyl)propylamine + putrescine = S-methyl-5'-thioadenosine + spermidine + H(+). It functions in the pathway amine and polyamine biosynthesis; spermidine biosynthesis; spermidine from putrescine: step 1/1. Its function is as follows. Catalyzes the irreversible transfer of a propylamine group from the amino donor S-adenosylmethioninamine (decarboxy-AdoMet) to putrescine (1,4-diaminobutane) to yield spermidine. In Methanocaldococcus jannaschii (strain ATCC 43067 / DSM 2661 / JAL-1 / JCM 10045 / NBRC 100440) (Methanococcus jannaschii), this protein is Polyamine aminopropyltransferase.